A 337-amino-acid chain; its full sequence is Biotin synthase (337 aa).

One can recognise a Radical SAM core domain in the interval 58 to 283; sequence PEVEVEGIIS…RTILRFAGGR (226 aa). Residues Cys-73, Cys-77, and Cys-80 each coordinate [4Fe-4S] cluster. Residues Cys-116, Cys-149, Cys-208, and Arg-278 each coordinate [2Fe-2S] cluster.

Belongs to the radical SAM superfamily. Biotin synthase family. As to quaternary structure, homodimer. It depends on [4Fe-4S] cluster as a cofactor. [2Fe-2S] cluster is required as a cofactor.

It catalyses the reaction (4R,5S)-dethiobiotin + (sulfur carrier)-SH + 2 reduced [2Fe-2S]-[ferredoxin] + 2 S-adenosyl-L-methionine = (sulfur carrier)-H + biotin + 2 5'-deoxyadenosine + 2 L-methionine + 2 oxidized [2Fe-2S]-[ferredoxin]. It functions in the pathway cofactor biosynthesis; biotin biosynthesis; biotin from 7,8-diaminononanoate: step 2/2. Its function is as follows. Catalyzes the conversion of dethiobiotin (DTB) to biotin by the insertion of a sulfur atom into dethiobiotin via a radical-based mechanism. The chain is Biotin synthase from Rhodococcus jostii (strain RHA1).